The primary structure comprises 595 residues: DNA-binding protein REB1 (595 aa).

Basic and acidic residues-rich tracts occupy residues 25–46 (KSGE…KEQD) and 54–71 (DPGR…RDAN). Positions 25 to 208 (KSGEDDAVNK…IDDHVDDVSV (184 aa)) are disordered. Residues 75-84 (AVAAAAVAAA) show a composition bias toward low complexity. The span at 114–123 (KKSKKNKNKL) shows a compositional bias: basic residues. Residues 163–176 (NIASQHPDFQQYLN) show a composition bias toward polar residues. Over residues 182–205 (EPKKEKSEERSYGDLSNIDDHVDD) the composition is skewed to basic and acidic residues. Residues 333 to 384 (HIFEQRGKWTPEEDAELARWCAEKEGQWSNIGKVLGRMPEDCRDRWRNYVKC) enclose the HTH myb-type domain. A DNA-binding region (H-T-H motif) is located at residues 360-382 (WSNIGKVLGRMPEDCRDRWRNYV). Positions 385-490 (GPNRAANKWS…QCRYKWNKLL (106 aa)) constitute a Myb-like domain. The interval 414–456 (TAYEDGEDDEMKDSSTKIEDSGDADMLDVQDSDKKPSISNSKK) is disordered. Residues 434 to 443 (SGDADMLDVQ) show a composition bias toward acidic residues.

Its subcellular location is the nucleus. Functionally, DNA-binding protein that recognizes sites within both the enhancer and the promoter of rRNA transcription, as well as upstream of many genes transcribed by RNA polymerase II. It is essential for cell growth. May stimulate or inhibit transcription. Specifically recognizes the sequence 5'-CCGGGTA-3' or 5'-CGGGTRR-3' (where R is any purine). This Kluyveromyces lactis (strain ATCC 8585 / CBS 2359 / DSM 70799 / NBRC 1267 / NRRL Y-1140 / WM37) (Yeast) protein is DNA-binding protein REB1 (REB1).